Here is a 181-residue protein sequence, read N- to C-terminus: Adenylyl-sulfate kinase (181 aa).

12-19 (GLSGAGKS) is an ATP binding site. Serine 86 functions as the Phosphoserine intermediate in the catalytic mechanism.

The protein belongs to the APS kinase family.

The enzyme catalyses adenosine 5'-phosphosulfate + ATP = 3'-phosphoadenylyl sulfate + ADP + H(+). It participates in sulfur metabolism; hydrogen sulfide biosynthesis; sulfite from sulfate: step 2/3. Catalyzes the synthesis of activated sulfate. In Microcystis aeruginosa (strain NIES-843 / IAM M-2473), this protein is Adenylyl-sulfate kinase.